The sequence spans 64 residues: Conotoxin VnMRCL-04 (64 aa).

The signal sequence occupies residues methionine 1–alanine 22. Positions arginine 23–arginine 48 are excised as a propeptide. Position 63 is a tryptophan amide (tryptophan 63).

It belongs to the conotoxin T superfamily. Contains 2 disulfide bonds that can be either 'C1-C3, C2-C4' or 'C1-C4, C2-C3', since these disulfide connectivities have been observed for conotoxins with cysteine framework V (for examples, see AC P0DQQ7 and AC P81755). In terms of tissue distribution, expressed by the venom duct.

It is found in the secreted. The protein is Conotoxin VnMRCL-04 of Conus ventricosus (Mediterranean cone).